Reading from the N-terminus, the 529-residue chain is MSNAPFLSEVSKRRTFAIISHPDAGKTTITEKVLLFGRAIQTAGTVKGRGSSQHAKSDWMEMEKERGISVTTSVMQFPYNDCLVNLLDTPGHEDFSEDTYRTLTAVDSCLMVIDAAKGVEDRTRKLMEVTRLRDTPIVTFMNKLDRDIRDPMELLDEVESELNIACAPVSWPIGCGKEFKGVYHIHRDETILYSTGQGHTIQEQRIIKGLDNPDLDAEVGADLAEQLREELELVLGASHEFDQEMFLKGELTPVFFGTALGNFGVDHMLDGLTDWAPAPLPRQANERAVEATEDKFTGFVFKIQANMDPKHRDRIAFMRIVSGTYTQGMKMNHVRLGKQVNISDAVTFMAGDRSRAEAAYAGDIIGLHNHGTIQIGDTFTQGESLKFSGIPNFAPELFRRIRLRDPLKQKQLLKGLVQLSEEGAVQVFRPLQNNDLIVGAVGVLQFDVVVARLKSEYNVEAIYESVNVATARWVECGDAKKLDEFQRKNQTNLALDGGDNLTYIAPTMVNLNLAKERFPEVEFRATREH.

In terms of domain architecture, tr-type G spans 11-280 (SKRRTFAIIS…GLTDWAPAPL (270 aa)). GTP is bound by residues 20 to 27 (SHPDAGKT), 88 to 92 (DTPGH), and 142 to 145 (NKLD).

This sequence belongs to the TRAFAC class translation factor GTPase superfamily. Classic translation factor GTPase family. PrfC subfamily.

It is found in the cytoplasm. Its function is as follows. Increases the formation of ribosomal termination complexes and stimulates activities of RF-1 and RF-2. It binds guanine nucleotides and has strong preference for UGA stop codons. It may interact directly with the ribosome. The stimulation of RF-1 and RF-2 is significantly reduced by GTP and GDP, but not by GMP. The polypeptide is Peptide chain release factor 3 (Vibrio vulnificus (strain CMCP6)).